A 149-amino-acid chain; its full sequence is MGRICPVNSRARRLRARPGRPSGDSLPYHQLQGGAPRLWSPDPGRPAAYRRAHVCDVTAPRWGSTSRQGEGAVLQRMLGRRAPPSWSRDHAYSRRGWENAALFLNRKRKQEGTENTSICCRPESALACGGNLSPQFLKKVIQIQTQELW.

Residues 1–41 form a disordered region; it reads MGRICPVNSRARRLRARPGRPSGDSLPYHQLQGGAPRLWSP.

Testis specific.

The polypeptide is Down syndrome critical region protein 9 (DSCR9) (Homo sapiens (Human)).